Consider the following 378-residue polypeptide: 1-acyl-sn-glycerol-3-phosphate acyltransferase delta (378 aa).

Residues 11-31 traverse the membrane as a helical segment; that stretch reads FLCHLVFCYVFIASGLIVNAI. The HXXXXD motif motif lies at 96–101; the sequence is HKFEID. The next 3 helical transmembrane spans lie at 125-145, 311-331, and 338-358; these read ELAY…IFCT, WLFW…SMVS, and LASL…MIGV.

It belongs to the 1-acyl-sn-glycerol-3-phosphate acyltransferase family. As to expression, expressed at a high levels in the brain, at intermediate or low levels in skeletal muscles, gut, kidney, spleen and lung. Barely detectable in heart and liver.

It localises to the endoplasmic reticulum membrane. The catalysed reaction is a 1-acyl-sn-glycero-3-phosphate + an acyl-CoA = a 1,2-diacyl-sn-glycero-3-phosphate + CoA. It catalyses the reaction (4Z,7Z,10Z,13Z,16Z,19Z)-docosahexaenoyl-CoA + 1-hexadecanoyl-sn-glycero-3-phosphate = 1-hexadecanoyl-2-(4Z,7Z,10Z,13Z,16Z,19Z-docosahexaenoyl)-sn-glycero-3-phosphate + CoA. The enzyme catalyses 1-octadecanoyl-sn-glycero-3-phosphate + (9Z,12Z)-octadecadienoyl-CoA = 1-octadecanoyl-2-(9Z,12Z-octadecadienoyl)-sn-glycero-3-phosphate + CoA. It carries out the reaction 1-octadecanoyl-sn-glycero-3-phosphate + (4Z,7Z,10Z,13Z,16Z,19Z)-docosahexaenoyl-CoA = 1-octadecanoyl-2-(4Z,7Z,10Z,13Z,16Z,19Z-docosahexaenoyl)-sn-glycero-3-phosphate + CoA. The catalysed reaction is (4Z,7Z,10Z,13Z,16Z,19Z)-docosahexaenoyl-CoA + 1-(9Z-octadecenoyl)-sn-glycero-3-phosphate = 1-(9Z-octadecenoyl)-2-(4Z,7Z,10Z,13Z,16Z,19Z-docosahexaenoyl)-sn-glycero-3-phosphate + CoA. It participates in phospholipid metabolism; CDP-diacylglycerol biosynthesis; CDP-diacylglycerol from sn-glycerol 3-phosphate: step 2/3. Converts 1-acyl-sn-glycerol-3-phosphate (lysophosphatidic acid or LPA) into 1,2-diacyl-sn-glycerol-3-phosphate (phosphatidic acid or PA) by incorporating an acyl moiety at the sn-2 position of the glycerol backbone. Exhibits high acyl-CoA specificity for polyunsaturated fatty acyl-CoA, especially docosahexaenoyl-CoA (22:6-CoA, DHA-CoA). This chain is 1-acyl-sn-glycerol-3-phosphate acyltransferase delta (Agpat4), found in Mus musculus (Mouse).